The primary structure comprises 473 residues: Purple acid phosphatase 1 (473 aa).

The signal sequence occupies residues 1–38 (MRLVVVGLWCLILGLILNPTKFCDAGVTSSYVRKSLSA). Asparagine 118 carries N-linked (GlcNAc...) asparagine glycosylation. A Fe cation-binding site is contributed by aspartate 172. Residue asparagine 180 is glycosylated (N-linked (GlcNAc...) asparagine). Positions 201 and 204 each coordinate Fe cation. Aspartate 201 provides a ligand contact to Mn(2+). Position 238 (asparagine 238) interacts with Mn(2+). Residue asparagine 238 participates in substrate binding. Asparagine 311 carries an N-linked (GlcNAc...) asparagine glycan. Histidine 323 is a binding site for Mn(2+). Residue histidine 333 is the Proton donor of the active site. Histidine 360 contacts Mn(2+). 360–362 (HVH) contacts substrate. Histidine 362 is a Fe cation binding site. The N-linked (GlcNAc...) asparagine glycan is linked to asparagine 433.

It belongs to the metallophosphoesterase superfamily. Purple acid phosphatase family. As to quaternary structure, homodimer; disulfide-linked. Requires Fe cation as cofactor. Mn(2+) is required as a cofactor. The cofactor is Zn(2+). It depends on Cu(2+) as a cofactor. Mg(2+) serves as cofactor.

It localises to the secreted. It catalyses the reaction a phosphate monoester + H2O = an alcohol + phosphate. This Ipomoea batatas (Sweet potato) protein is Purple acid phosphatase 1 (PAP1).